We begin with the raw amino-acid sequence, 306 residues long: Ribonuclease BN (306 aa).

Histidine 64, histidine 66, aspartate 68, histidine 69, histidine 141, aspartate 212, and histidine 270 together coordinate Zn(2+). Aspartate 68 serves as the catalytic Proton acceptor.

The protein belongs to the RNase Z family. RNase BN subfamily. As to quaternary structure, homodimer. The cofactor is Zn(2+).

Functionally, zinc phosphodiesterase, which has both exoribonuclease and endoribonuclease activities. This is Ribonuclease BN from Klebsiella pneumoniae (strain 342).